A 312-amino-acid chain; its full sequence is Zinc-finger homeodomain protein 4 (312 aa).

The interval 20-74 (GGGGSHGHMIHHHDHHAANSAPPTHNNNNTTQPPPMPLHGNGHGNNYDHHHHQDP) is disordered. Low complexity predominate over residues 37–50 (ANSAPPTHNNNNTT). The segment at 90–139 (YKECLKNHAAAMGGNATDGCGEFMPSGEDGSIEALTCSACNCHRNFHRKE) adopts a ZF-HD dimerization-type; degenerate zinc-finger fold. Positions 218–281 (KKRFRTKFTP…NNKIHFSKKN (64 aa)) form a DNA-binding region, homeobox.

As to quaternary structure, homo- and heterodimer with other ZFHD proteins. Interacts with ZHD1, ZHD2, ZHD5, ZHD7, ZHD8, ZHD10 and ZHD11. Mostly expressed in flowers and inflorescence.

The protein localises to the nucleus. In terms of biological role, putative transcription factor. Probably involved in the regulation of floral induction. The chain is Zinc-finger homeodomain protein 4 (ZHD4) from Arabidopsis thaliana (Mouse-ear cress).